Here is a 257-residue protein sequence, read N- to C-terminus: Global transcriptional regulator CodY (257 aa).

Positions 1 to 155 are GAF domain; the sequence is MSLLSKTREL…AATVLGMEIL (155 aa). A DNA-binding region (H-T-H motif) is located at residues 203–222; that stretch reads ASKVADRVGITRSVIVNALR.

The protein belongs to the CodY family.

Its subcellular location is the cytoplasm. Functionally, DNA-binding global transcriptional regulator which is involved in the adaptive response to starvation and acts by directly or indirectly controlling the expression of numerous genes in response to nutrient availability. During rapid exponential growth, CodY is highly active and represses genes whose products allow adaptation to nutrient depletion. This chain is Global transcriptional regulator CodY, found in Staphylococcus carnosus (strain TM300).